Here is an 897-residue protein sequence, read N- to C-terminus: Pre-mRNA-splicing factor CWC22 homolog (897 aa).

The segment covering 1-10 (MSSSRSQSPE) has biased composition (polar residues). Positions 1 to 155 (MSSSRSQSPE…EKKKKEPLDI (155 aa)) are disordered. 3 stretches are compositionally biased toward basic and acidic residues: residues 36–54 (SSEK…REVS), 93–107 (RSKE…EKSP), and 131–155 (RSSE…PLDI). Positions 194–382 (KKKIHGLVNR…ETAMQIRKDK (189 aa)) constitute an MIF4G domain. A disordered region spans residues 444-472 (NADISDEDGGDELDDEEEGSDVEEAPKKT). Over residues 447-466 (ISDEDGGDELDDEEEGSDVE) the composition is skewed to acidic residues. One can recognise an MI domain in the interval 485 to 601 (AFRREVYLTM…DWKILADMKM (117 aa)). Composition is skewed to low complexity over residues 689-710 (LDQL…SDSS) and 720-730 (DSSSDSSSSSE). The disordered stretch occupies residues 689–897 (LDQLKAESSS…VESDDRRRRR (209 aa)). The segment covering 743 to 897 (NSEESSKKKE…VESDDRRRRR (155 aa)) has biased composition (basic and acidic residues).

It belongs to the CWC22 family. Expressed in germ cells, oocytes, and sperm cells.

Its subcellular location is the nucleus. It is found in the nucleus speckle. In terms of biological role, required for pre-mRNA splicing and for exon-junction complex (EJC) assembly. Hinders EIF4A3 from non-specifically binding RNA and escorts it to the splicing machinery to promote EJC assembly on mature mRNAs. Through its role in EJC assembly, required for nonsense-mediated mRNA decay. Plays a role in the nuclear retention of unspliced mRNAs. Plays a role in sex determination. Required for early embryogenesis and tissue differentiation. The chain is Pre-mRNA-splicing factor CWC22 homolog from Caenorhabditis elegans.